Reading from the N-terminus, the 170-residue chain is Adenine phosphoribosyltransferase (170 aa).

This sequence belongs to the purine/pyrimidine phosphoribosyltransferase family. In terms of assembly, homodimer.

The protein resides in the cytoplasm. It carries out the reaction AMP + diphosphate = 5-phospho-alpha-D-ribose 1-diphosphate + adenine. It participates in purine metabolism; AMP biosynthesis via salvage pathway; AMP from adenine: step 1/1. Its function is as follows. Catalyzes a salvage reaction resulting in the formation of AMP, that is energically less costly than de novo synthesis. This is Adenine phosphoribosyltransferase from Maridesulfovibrio salexigens (strain ATCC 14822 / DSM 2638 / NCIMB 8403 / VKM B-1763) (Desulfovibrio salexigens).